A 181-amino-acid chain; its full sequence is MSRKKKSRKPGAAGAPEFMVTRNRSESDVAGRLRKKDKKRKGLKAGGRNSEEGAQQKHGSSQVRDPRLGSKKKIPLIVEPAKKLTKQERRLSAEQELEMLENDAKLNVLLDRIESGENLGRGLQQYVDEKLDRIEQLMSQLGLLEPEAEEEFEEEAPVRKSRSDDDLLADFEDFDMDDYKG.

Disordered stretches follow at residues 1-75 and 145-181; these read MSRK…KKIP and EPEA…DYKG. Over residues 32 to 43 the composition is skewed to basic residues; that stretch reads RLRKKDKKRKGL. Residues 146 to 155 are compositionally biased toward acidic residues; it reads PEAEEEFEEE. Positions 156–165 are enriched in basic and acidic residues; that stretch reads APVRKSRSDD. Residues 166-181 are compositionally biased toward acidic residues; sequence DLLADFEDFDMDDYKG.

Belongs to the YihI family. As to quaternary structure, interacts with Der.

Its function is as follows. A GTPase-activating protein (GAP) that modifies Der/EngA GTPase function. May play a role in ribosome biogenesis. This is Der GTPase-activating protein YihI from Vibrio vulnificus (strain CMCP6).